The primary structure comprises 433 residues: Ornithine decarboxylase 1B, chloroplastic (433 aa).

Position 96 is an N6-(pyridoxal phosphate)lysine (Lys96). Residues Ser228, Gly266, and 299 to 302 (EPGR) contribute to the pyridoxal 5'-phosphate site. Residue 342–343 (YD) participates in substrate binding. Residue Cys378 is the Proton donor; shared with dimeric partner of the active site. Asp379 provides a ligand contact to substrate. Tyr407 is a pyridoxal 5'-phosphate binding site.

This sequence belongs to the Orn/Lys/Arg decarboxylase class-II family. In terms of assembly, homodimer. Only the dimer is catalytically active, as the active sites are constructed of residues from both monomers. Requires pyridoxal 5'-phosphate as cofactor.

The protein resides in the plastid. Its subcellular location is the chloroplast. It catalyses the reaction L-ornithine + H(+) = putrescine + CO2. It participates in alkaloid biosynthesis; nicotine biosynthesis. It functions in the pathway amine and polyamine biosynthesis; putrescine biosynthesis via L-ornithine pathway; putrescine from L-ornithine: step 1/1. Functionally, involved in the biosynthesis of pyridine alkaloid natural products, leading mainly to the production of anabasine, anatabine, nicotine and nornicotine, effective deterrents against herbivores with antiparasitic and pesticide properties (neurotoxins); nornicotine serves as the precursor in the synthesis of the carcinogen compound N'-nitrosonornicotine (NNN). Catalyzes the first and rate-limiting step of polyamine biosynthesis that converts ornithine into putrescine, which is the precursor for the polyamines, spermidine and spermine. Polyamines are essential for cell proliferation and are implicated in cellular processes, ranging from DNA replication to apoptosis. The sequence is that of Ornithine decarboxylase 1B, chloroplastic from Nicotiana tabacum (Common tobacco).